The following is a 124-amino-acid chain: MAAELHVALVAADREVWSGEATLVVARTTSGDIGVMPGHQPLLGVLESGPVTIRTSDGGTVVAAVHGGFISFADNKLSLLAEVAELSDEIDVHRAERKLEQAKTEGDAHAERRADVRLRAAAGR.

Over residues 99–118 (LEQAKTEGDAHAERRADVRL) the composition is skewed to basic and acidic residues. The tract at residues 99–124 (LEQAKTEGDAHAERRADVRLRAAAGR) is disordered.

It belongs to the ATPase epsilon chain family. As to quaternary structure, F-type ATPases have 2 components, CF(1) - the catalytic core - and CF(0) - the membrane proton channel. CF(1) has five subunits: alpha(3), beta(3), gamma(1), delta(1), epsilon(1). CF(0) has three main subunits: a, b and c.

The protein localises to the cell membrane. Its function is as follows. Produces ATP from ADP in the presence of a proton gradient across the membrane. The sequence is that of ATP synthase epsilon chain (atpC) from Streptomyces coelicolor (strain ATCC BAA-471 / A3(2) / M145).